We begin with the raw amino-acid sequence, 7059 residues long: Replicase polyprotein 1ab (7059 aa).

In terms of domain architecture, CoV Nsp1 globular spans 54–196 (PENHVMVDCR…PWVMYLRKCG (143 aa)). The BetaCoV Nsp1 C-terminal domain maps to 216 to 246 (FKVEDAYDLVHDEPKGKFSKKAYALIRGYRG). In terms of domain architecture, CoV Nsp2 N-terminal spans 250-519 (LLYVDQYGCD…LICKALYLDY (270 aa)). Zn(2+)-binding residues include Cys-392, Cys-397, Cys-413, and Cys-416. The tract at residues 392 to 416 (CEQDLCDFKGWVPGNMIDGFACTTC) is C4. The CoV Nsp2 middle domain maps to 524-713 (CGNLHQRELL…AQAFRSGAKV (190 aa)). The CoV Nsp2 C-terminal domain occupies 733 to 851 (RRRICLSGSK…LDQAWRVPCA (119 aa)). The 114-residue stretch at 853–966 (RCVTFKEQPT…LYCAFTAPED (114 aa)) folds into the Ubiquitin-like 1 domain. The segment covering 972–986 (ESGVEEDDVEGEETD) has biased composition (acidic residues). Residues 972-1000 (ESGVEEDDVEGEETDLTVTSAGEPCVASE) are disordered. Residues 1036–1274 (DLESVIQDYE…IAQLYGSCIT (239 aa)) enclose the Peptidase C16 1 domain. Cys-1074 (for PL1-PRO activity) is an active-site residue. Cys-1151, Cys-1154, Cys-1177, and Cys-1179 together coordinate Zn(2+). The C4-type 1 zinc-finger motif lies at 1151–1179 (CIKCDLALKLKGLDAMFFYGDVVSHVCKC). Active-site for PL1-PRO activity residues include His-1225 and Asp-1236. Positions 1275–1435 (PNVCFVKGDI…LISKCQITAV (161 aa)) constitute a Macro domain. Positions 1491–1563 (DDARTFVQSN…VAQIKALFLD (73 aa)) constitute a DPUP domain. Residues 1562-1617 (LDKVDILLTVDGVNFTNRFVPVGESFGKSLGNVFCDGVNVTKHKCDINYKGKVFFQ) enclose the Ubiquitin-like 2 domain. One can recognise a Peptidase C16 2 domain in the interval 1631-1892 (SSFNFDQKEL…KIEYKPDLSQ (262 aa)). The active-site For PL2-PRO activity is the Cys-1671. Zn(2+) is bound by residues Cys-1749, Cys-1751, Cys-1783, and Cys-1785. The C4-type 2 zinc-finger motif lies at 1749–1785 (CKCGVKQEQRTGVDAVMHFGTLSREDLEIGYTVDCSC). Active-site for PL2-PRO activity residues include His-1828 and Asp-1842. Residues 1906–2007 (IKAQFKTFEK…TYFNRPLLVD (102 aa)) form the Nucleic acid-binding domain. Residues 2020 to 2169 (DDGGDISESD…ADNKVIYTTE (150 aa)) enclose the G2M domain. Helical transmembrane passes span 2138-2158 (ISACFNFIKWLFVLLFGWIKI), 2199-2219 (ACIIATIFLLWFNFIYANVIF), and 2221-2241 (DFYLPKIGFLPTFVGKIVQWI). Residues 2138–2385 (ISACFNFIKW…ASFIKLFSLF (248 aa)) form an HD1 region. A 3Ecto domain is found at 2235–2296 (GKIVQWIKNT…AIDVVQYEAD (62 aa)). Disulfide bonds link Cys-2251-Cys-2275 and Cys-2266-Cys-2272. A run of 3 helical transmembrane segments spans residues 2313–2333 (LIVSYALYTAWFYPLFALISI), 2343–2363 (LLMLSTLHWSVRLLVSLANML), and 2365–2385 (AHVFMRFYIIIASFIKLFSLF). The interval 2383–2473 (SLFRHVAYGC…ELKRPIQPTD (91 aa)) is Y1. The CoV Nsp3 Y domain occupies 2383–2750 (SLFRHVAYGC…LTTPFSLKGG (368 aa)). His-2387, Cys-2392, Cys-2397, Cys-2400, Cys-2433, His-2436, Cys-2440, and Cys-2443 together coordinate Zn(2+). Residues 2387-2400 (HVAYGCSKSGCLFC) are ZF1. A ZF2 region spans residues 2433-2443 (CSKHQWNCIDC). Positions 2474–2566 (VAYHTVTDVK…MVDKILITTA (93 aa)) are Y2. The tract at residues 2474 to 2750 (VAYHTVTDVK…LTTPFSLKGG (277 aa)) is coV-Y. Residues 2567–2649 (NTGTSVTETM…DSVMSAVSAG (83 aa)) form a Y3 region. The tract at residues 2650 to 2750 (LELTDESCNN…LTTPFSLKGG (101 aa)) is Y4. The next 7 helical transmembrane spans lie at 2752 to 2772 (VFSYFVYVCFVLSLVCFIGLW), 2824 to 2844 (STFGLSYYSNSMACPIVVAVV), 3009 to 3029 (VFDLIYQLFKGLAQPVDFLAL), 3031 to 3051 (ASSIAGAILAVIVVLGFYYLI), 3063 to 3083 (IVFVNVIVWCVNFMMLFVFQV), 3090 to 3110 (VYAICYFYATLYFPSEISVIM), and 3115 to 3135 (LVMYGTIMPLWFCLLYISVVV). The interval 2752 to 3135 (VFSYFVYVCF…FCLLYISVVV (384 aa)) is HD2. Residues 3149 to 3246 (LGTSVRSDGT…TASVSTSFLQ (98 aa)) form the Nsp4C domain. A Peptidase C30 domain is found at 3247–3549 (SGIVKMVNPT…YQQLAGIKLQ (303 aa)). Residues His-3287 and Cys-3391 each act as for 3CL-PRO activity in the active site. The segment at 3319-3775 (LSLTVMSYQM…IISCYWGLFS (457 aa)) is HD3. Transmembrane regions (helical) follow at residues 3558–3578 (GIVCWIMASTFLFSCIITAFV), 3588–3608 (TNMLSITFCALCVISLAMLLV), 3615–3635 (LTMYIIPVLFTLLYNNYLVVY), 3657–3677 (TYTDEVIYGMLLLIGMVFVTL), 3684–3704 (LFSFIMFVGRVISVVSLWYMG), 3711–3731 (ILLMLASLFGTYTWTTALSMA), and 3755–3775 (IVLVCYLFIGYIISCYWGLFS). The 89-residue stretch at 3837–3925 (SKLTDVKCAN…DYAKDNTVLQ (89 aa)) folds into the RdRp Nsp7 cofactor domain. The RdRp Nsp8 cofactor domain occupies 3926–4122 (ALQSEFVNMA…HNEVSATVLQ (197 aa)). One can recognise a Nsp9 ssRNA-binding domain in the interval 4123–4232 (NNELMPAKLK…GTISSTVRLQ (110 aa)). In terms of domain architecture, ExoN/MTase coactivator spans 4233–4370 (AGTATEYASN…CVSTDTTVQS (138 aa)). Positions 4306, 4309, 4315, 4322, 4348, 4351, 4359, and 4361 each coordinate Zn(2+). Zinc fingers lie at residues 4306-4322 (CIYCRARVEHPDVDGLC) and 4348-4361 (CQVCGFWRDGSCSC). Residues 4375 to 4630 (FLNRVRGTSV…DCELYVNNAY (256 aa)) enclose the NiRAN domain. Asn-4578 and Asp-4587 together coordinate Mn(2+). The region spanning 4631–4729 (RLFDLVQYDF…MNMDVDTHRY (99 aa)) is the Nsp12 Interface domain. Residues His-4660, Cys-4666, Cys-4671, Cys-4675, and Cys-4852 each coordinate Zn(2+). The Nsp12 RNA-dependent RNA polymerase domain occupies 4730 to 5297 (RLSLKDLLLY…NMYLRSAVMQ (568 aa)). The segment at 4732-4946 (SLKDLLLYAA…HQKCLKSIAA (215 aa)) is rdRp Fingers N-ter. Residues 4947–4985 (TRGVPVVIGTTKFYGGWDDMLRRLIKDVDNPVLMGWDYP) form a rdRp Palm N-ter region. Positions 4977–5139 (PVLMGWDYPK…CYNSDYASKG (163 aa)) constitute a RdRp catalytic domain. The segment at 4986–5044 (KCDRAMPNILRIVSSLVLARKHEACCSQSDRFYRLANECAQVLSEIVMCGGCYYVKPGG) is rdRp Fingers C-ter. Residues His-5007, Cys-5010, and Cys-5011 each contribute to the Zn(2+) site. The tract at residues 5045–5180 (TSSGDATTAF…NNGPHEFCSQ (136 aa)) is rdRp Palm C-ter. Catalysis depends on residues Ser-5124, Asp-5125, and Asp-5126. The rdRp Thumb stretch occupies residues 5181–5297 (HTMLVKMDGD…NMYLRSAVMQ (117 aa)). In terms of domain architecture, CV ZBD spans 5298-5410 (SVGACVVCSS…DDFNRIASCK (113 aa)). The Zn(2+) site is built by Cys-5302, Cys-5305, Cys-5313, Cys-5316, Cys-5323, Cys-5326, His-5330, His-5336, Cys-5347, Cys-5352, Cys-5369, and His-5372. One can recognise a (+)RNA virus helicase ATP-binding domain in the interval 5553–5734 (SVLETFQNNV…MCCLGPDIFL (182 aa)). 5578–5585 (GPPGTGKS) is a binding site for ATP. In terms of domain architecture, (+)RNA virus helicase C-terminal spans 5735–5904 (GTCYRCPKEI…VETRVQCSTN (170 aa)). Residues 5971–6186 (LFITKEEAVK…RCLAVYDCFC (216 aa)) enclose the ExoN domain. Active-site residues include Asp-5989, Glu-5991, and Glu-6090. Zn(2+) contacts are provided by His-6156, Cys-6160, and His-6163. Active-site residues include His-6167 and Asp-6172. Zn(2+) is bound at residue Cys-6178. Residues 6195–6421 (YPIISNELSI…NLWNTFTKLQ (227 aa)) enclose the N7-MTase domain. 6230 to 6236 (DIGNPKA) provides a ligand contact to S-adenosyl-L-methionine. The interval 6308 to 6322 (CNGGSLYVNKHAFHT) is gpppA-binding. Cys-6346, Cys-6367, Cys-6378, and His-6381 together coordinate Zn(2+). Residues 6422–6482 (SLENVVYNLV…NVAVELFAKR (61 aa)) form the Nsp15 N-terminal oligomerization domain. The AV-Nsp11N/CoV-Nsp15M domain occupies 6483–6603 (SIRHHPELKL…FAVRKEGQDV (121 aa)). The 140-residue stretch at 6653 to 6792 (TCRTDMEKDF…NDEKVMTFYP (140 aa)) folds into the NendoU domain. Active-site residues include His-6683, His-6698, Lys-6738, Lys-6841, Asp-6935, Lys-6971, and Glu-7004. Positions 6797 to 7059 (ASDWKPGYSM…NSRLSWLVMP (263 aa)) constitute a Nidovirus-type SAM-dependent 2'-O-MTase domain.

The protein belongs to the coronaviruses polyprotein 1ab family. As to quaternary structure, interacts with host PHB and PHB2. In terms of assembly, interacts with papain-like protease nsp3 and non-structural protein 6. Monomer. Homodimer. Only the homodimer shows catalytic activity. As to quaternary structure, interacts with nsp8 and nsp12 to form the replication-transcription complex (RTC): nsp12, nsp7, two subunits of nsp8, and up to two subunits of nsp13. In terms of assembly, interacts with nsp7, nsp13 and nsp12 to form the replication-transcription complex (RTC): nsp12, nsp7, two subunits of nsp8, and up to two subunits of nsp13. Interacts with nsp12. As to quaternary structure, interacts with proofreading exoribonuclease nsp14 and 2'-O-methyltransferase nsp16; these interactions enhance nsp14 and nsp16 enzymatic activities. In terms of assembly, interacts with nsp7 and nsp8 to form the replication-transcription complex (RTC): nsp12, nsp7, two subunits of nsp8, and up to two subunits of nsp13. Interacts with nsp9. Interacts with nsp8 to form the replication-transcription complex (RTC): nsp12, nsp7, two subunits of nsp8, and up to two subunits of nsp13. Requires Mn(2+) as cofactor. Mg(2+) serves as cofactor. Post-translationally, specific enzymatic cleavages in vivo by its own proteases yield mature proteins. 3CL-PRO and PL-PRO proteinases are autocatalytically processed.

The protein resides in the host membrane. Its subcellular location is the host cytoplasm. It is found in the host perinuclear region. The protein localises to the host endoplasmic reticulum-Golgi intermediate compartment. It catalyses the reaction RNA(n) + a ribonucleoside 5'-triphosphate = RNA(n+1) + diphosphate. The enzyme catalyses ATP + H2O = ADP + phosphate + H(+). It carries out the reaction Thiol-dependent hydrolysis of ester, thioester, amide, peptide and isopeptide bonds formed by the C-terminal Gly of ubiquitin (a 76-residue protein attached to proteins as an intracellular targeting signal).. The catalysed reaction is a 5'-end (N(7)-methyl 5'-triphosphoguanosine)-ribonucleoside in mRNA + S-adenosyl-L-methionine = a 5'-end (N(7)-methyl 5'-triphosphoguanosine)-(2'-O-methyl-ribonucleoside) in mRNA + S-adenosyl-L-homocysteine + H(+). It catalyses the reaction uridylyl-uridylyl-ribonucleotide-RNA = a 3'-end uridylyl-2',3'-cyclophospho-uridine-RNA + a 5'-end dephospho-ribonucleoside-RNA. The enzyme catalyses a 5'-end diphospho-ribonucleoside in mRNA + GTP + H(+) = a 5'-end (5'-triphosphoguanosine)-ribonucleoside in mRNA + diphosphate. It carries out the reaction a 5'-end (5'-triphosphoguanosine)-ribonucleoside in mRNA + S-adenosyl-L-methionine = a 5'-end (N(7)-methyl 5'-triphosphoguanosine)-ribonucleoside in mRNA + S-adenosyl-L-homocysteine. Its function is as follows. The replicase polyprotein of coronaviruses is a multifunctional protein: it contains the activities necessary for the transcription of negative stranded RNA, leader RNA, subgenomic mRNAs and progeny virion RNA as well as proteinases responsible for the cleavage of the polyprotein into functional products. Inhibits host translation by interacting with the 40S ribosomal subunit. The nsp1-40S ribosome complex further induces an endonucleolytic cleavage near the 5'UTR of host mRNAs, targeting them for degradation. Viral mRNAs are not susceptible to nsp1-mediated endonucleolytic RNA cleavage thanks to the presence of a 5'-end leader sequence and are therefore protected from degradation. By suppressing host gene expression, nsp1 facilitates efficient viral gene expression in infected cells and evasion from host immune response. Functionally, may play a role in the modulation of host cell survival signaling pathway by interacting with host PHB and PHB2. Indeed, these two proteins play a role in maintaining the functional integrity of the mitochondria and protecting cells from various stresses. In terms of biological role, responsible for the cleavages located at the N-terminus of the replicase polyprotein. In addition, PL-PRO possesses a deubiquitinating/deISGylating activity and processes both 'Lys-48'- and 'Lys-63'-linked polyubiquitin chains from cellular substrates. Participates together with nsp4 in the assembly of virally-induced cytoplasmic double-membrane vesicles necessary for viral replication. Antagonizes innate immune induction of type I interferon by blocking the phosphorylation, dimerization and subsequent nuclear translocation of host IRF3. Also prevents host NF-kappa-B signaling. Its function is as follows. Participates in the assembly of virally-induced cytoplasmic double-membrane vesicles necessary for viral replication. Cleaves the C-terminus of replicase polyprotein at 11 sites. Recognizes substrates containing the core sequence [ILMVF]-Q-|-[SGACN]. Also able to bind an ADP-ribose-1''-phosphate (ADRP). Functionally, plays a role in the initial induction of autophagosomes from host endoplasmic reticulum. Later, limits the expansion of these phagosomes that are no longer able to deliver viral components to lysosomes. In terms of biological role, forms a hexadecamer with nsp8 (8 subunits of each) that may participate in viral replication by acting as a primase. Alternatively, may synthesize substantially longer products than oligonucleotide primers. Its function is as follows. Forms a hexadecamer with nsp7 (8 subunits of each) that may participate in viral replication by acting as a primase. Alternatively, may synthesize substantially longer products than oligonucleotide primers. Forms a primer, NSP9-pU, which is utilized by the polymerase for the initiation of RNA chains. Interacts with ribosome signal recognition particle RNA (SRP). Together with NSP8, suppress protein integration into the cell membrane, thereby disrupting host immune defenses. Functionally, plays a pivotal role in viral transcription by stimulating both nsp14 3'-5' exoribonuclease and nsp16 2'-O-methyltransferase activities. Therefore plays an essential role in viral mRNAs cap methylation. In terms of biological role, RNA-directed RNA polymerase that catalyzes the transcription of viral genomic and subgenomic RNAs. Acts in complex with nsp7 and nsp8 to transcribe both the minus and positive strands of genomic RNA. The kinase-like NiRAN domain of NSP12 attaches one or more nucleotides to the amino terminus of NSP9, forming a covalent RNA-protein intermediate that serves as transcription/replication primer. Subgenomic RNAs (sgRNAs) are formed by discontinuous transcription: The polymerase has the ability to pause at transcription-regulating sequences (TRS) and jump to the leader TRS, resulting in a major deletion. This creates a series of subgenomic RNAs that are replicated, transcribed and translated. In addition, Nsp12 is a subunit of the viral RNA capping enzyme that catalyzes the RNA guanylyltransferase reaction for genomic and sub-genomic RNAs. Subsequently, the NiRAN domain transfers RNA to GDP, and forms the core cap structure GpppA-RNA. Its function is as follows. Multi-functional protein with a zinc-binding domain in N-terminus displaying RNA and DNA duplex-unwinding activities with 5' to 3' polarity. Activity of helicase is dependent on magnesium. Plays a role in viral RNA synthesis through two distinct activities. The N7-guanine methyltransferase activity plays a role in the formation of the cap structure GpppA-RNA. The proofreading exoribonuclease reduces the sensitivity of the virus to RNA mutagens during replication. This activity acts on both ssRNA and dsRNA in a 3'-5' direction. Functionally, plays a role in viral transcription/replication and prevents the simultaneous activation of host cell dsRNA sensors, such as MDA5/IFIH1, OAS, and PKR. Acts by degrading the 5'-polyuridines generated during replication of the poly(A) region of viral genomic and subgenomic RNAs. Catalyzes a two-step reaction in which a 2'3'-cyclic phosphate (2'3'-cP) is first generated by 2'-O transesterification, which is then hydrolyzed to a 3'-phosphate (3'-P). If not degraded, poly(U) RNA would hybridize with poly(A) RNA tails and activate host dsRNA sensors. In terms of biological role, methyltransferase that mediates mRNA cap 2'-O-ribose methylation to the 5'-cap structure of viral mRNAs. N7-methyl guanosine cap is a prerequisite for binding of nsp16. Therefore plays an essential role in viral mRNAs cap methylation which is essential to evade immune system. The sequence is that of Replicase polyprotein 1ab (rep) from Bos taurus (Bovine).